Consider the following 200-residue polypeptide: Guanylate kinase (200 aa).

Residues Gly-6–Leu-184 enclose the Guanylate kinase-like domain. Gly-13 to Gly-20 provides a ligand contact to ATP.

This sequence belongs to the guanylate kinase family.

The protein resides in the cytoplasm. It catalyses the reaction GMP + ATP = GDP + ADP. Its function is as follows. Essential for recycling GMP and indirectly, cGMP. This Desulfitobacterium hafniense (strain Y51) protein is Guanylate kinase.